The sequence spans 251 residues: DNA repair protein RecO (251 aa).

The protein belongs to the RecO family.

Its function is as follows. Involved in DNA repair and RecF pathway recombination. The sequence is that of DNA repair protein RecO from Lactococcus lactis subsp. cremoris (strain SK11).